We begin with the raw amino-acid sequence, 198 residues long: Recombination protein RecR (198 aa).

Residues 58–73 (CSVCGNYTDTDPCAIC) form a C4-type zinc finger. In terms of domain architecture, Toprim spans 81–175 (SLVCVVEEPK…KVTRIAHGIP (95 aa)).

This sequence belongs to the RecR family.

In terms of biological role, may play a role in DNA repair. It seems to be involved in an RecBC-independent recombinational process of DNA repair. It may act with RecF and RecO. This Clostridium acetobutylicum (strain ATCC 824 / DSM 792 / JCM 1419 / IAM 19013 / LMG 5710 / NBRC 13948 / NRRL B-527 / VKM B-1787 / 2291 / W) protein is Recombination protein RecR.